Here is a 121-residue protein sequence, read N- to C-terminus: MKRINFSRAKQRALRAKRLHVKIRNLQLAANKPVLVITKTNAHIWAQLICYNKNITLASSSSVQLDLQNGNKDNARLVGADIAKKALAQGFKQVIFNKNGAKYHGRIKALADAAREAGLEF.

This sequence belongs to the universal ribosomal protein uL18 family. Part of the 50S ribosomal subunit; part of the 5S rRNA/L5/L18/L25 subcomplex. Contacts the 5S and 23S rRNAs.

In terms of biological role, this is one of the proteins that bind and probably mediate the attachment of the 5S RNA into the large ribosomal subunit, where it forms part of the central protuberance. The chain is Large ribosomal subunit protein uL18 from Ureaplasma urealyticum serovar 10 (strain ATCC 33699 / Western).